The chain runs to 193 residues: p53 apoptosis effector related to PMP-22 (193 aa).

Transmembrane regions (helical) follow at residues 12 to 32, 79 to 99, 110 to 130, and 151 to 171; these read RWILPLLLLSAIAFDIIALAG, AMLFCGFIILVICFILSFFAL, VIGGLLALAAVFQIISLVIYP, and WAYGFGWAATIILIGCAFFFC.

It belongs to the TMEM47 family. As to quaternary structure, (Microbial infection) Interacts with S.typhimurium sipA and sctB1/sipC. Expressed in skin, heart, placental, liver, pancreas, keratinocytes and dermal fibroblasts. May translocate to the intestinal apical epithelial cell surface via sipA and sctB1/sipC-promoted exocytic translocation following infection by S. Typhimurium.

It localises to the cell junction. The protein localises to the desmosome. The protein resides in the cell membrane. It is found in the cytoplasm. In terms of biological role, component of intercellular desmosome junctions. Plays a role in stratified epithelial integrity and cell-cell adhesion by promoting desmosome assembly. Thereby plays a role in barrier function of the skin against infection. Plays a role in mammary epithelial tissue homeostasis and remodeling during and after pregnancy, potentially via its involvement in desmosome cell-cell junctions. Required for tooth enamel development via facilitating desmosome-mediated ameloblast adhesion to the stratum intermedium during the transitional stage of amelogenesis. May also play a role in downstream transcriptional regulation of other genes involved in amelogenesis such as AMBN, ENAM, MMP20 and KLK4. Plays a role as an effector in the TP53-dependent apoptotic pathway. Positively regulates apoptosis in T-helper 17 (Th17) cell populations via caspase-dependent signaling. Promotes neutrophil transepithelial migration in response to chemoattractants such as hepoxilin A3 (HXA3), N-Formylmethionyl-leucyl-phenylalanine (fMLP) and CXCL8/IL-8. Required for neutrophil transepithelial migration in response to S.typhimurium infection. May act as a positive regulator of endothelial cell apoptosis in response to blood flow-derived shear stress. The polypeptide is p53 apoptosis effector related to PMP-22 (Homo sapiens (Human)).